The following is a 353-amino-acid chain: MTAILERRESESLWGRFCNWITSTENRLYIGWFGVLMIPTLLTATSVFIIAFIAAPPVDIDGIREPVSGSLLYGNNIISGAIIPTSAAIGLHFYPIWEAASVDEWLYNGGPYELIVLHFLLGVACYMGREWELSFRLGMRPWIAVAYSAPVAAATAVFLIYPIGQGSFSDGMPLGISGTFNFMIVFQAEHNILMHPFHMLGVAGVFGGSLFSAMHGSLVTSSLIRETTENESANAGYRFGQEEETYNIVAAHGYFGRLIFQYASFNNSRSLHFFLAAWPVVGIWFTALGISTMAFNLNGFNFNQSVVDSQGRVINTWADIINRANLGMEVMHERNAHNFPLDLAGVEVPSTNG.

The residue at position 2 (Thr2) is an N-acetylthreonine. Thr2 is modified (phosphothreonine). The next 3 membrane-spanning stretches (helical) occupy residues 29-46 (YIGW…TATS), 118-133 (HFLL…EWEL), and 142-156 (WIAV…AATA). His118 provides a ligand contact to chlorophyll a. Position 126 (Tyr126) interacts with pheophytin a. The [CaMn4O5] cluster site is built by Asp170 and Glu189. The chain crosses the membrane as a helical span at residues 197 to 218 (FHMLGVAGVFGGSLFSAMHGSL). His198 is a binding site for chlorophyll a. Residues His215 and 264-265 (SF) each bind a quinone. His215 serves as a coordination point for Fe cation. His272 contributes to the Fe cation binding site. The helical transmembrane segment at 274-288 (FLAAWPVVGIWFTAL) threads the bilayer. [CaMn4O5] cluster-binding residues include His332, Glu333, Asp342, and Ala344. A propeptide spanning residues 345–353 (GVEVPSTNG) is cleaved from the precursor.

Belongs to the reaction center PufL/M/PsbA/D family. In terms of assembly, PSII is composed of 1 copy each of membrane proteins PsbA, PsbB, PsbC, PsbD, PsbE, PsbF, PsbH, PsbI, PsbJ, PsbK, PsbL, PsbM, PsbT, PsbX, PsbY, PsbZ, Psb30/Ycf12, at least 3 peripheral proteins of the oxygen-evolving complex and a large number of cofactors. It forms dimeric complexes. The cofactor is The D1/D2 heterodimer binds P680, chlorophylls that are the primary electron donor of PSII, and subsequent electron acceptors. It shares a non-heme iron and each subunit binds pheophytin, quinone, additional chlorophylls, carotenoids and lipids. D1 provides most of the ligands for the Mn4-Ca-O5 cluster of the oxygen-evolving complex (OEC). There is also a Cl(-1) ion associated with D1 and D2, which is required for oxygen evolution. The PSII complex binds additional chlorophylls, carotenoids and specific lipids.. Post-translationally, tyr-161 forms a radical intermediate that is referred to as redox-active TyrZ, YZ or Y-Z. In terms of processing, C-terminally processed by CTPA; processing is essential to allow assembly of the oxygen-evolving complex and thus photosynthetic growth.

It localises to the plastid. It is found in the chloroplast thylakoid membrane. The catalysed reaction is 2 a plastoquinone + 4 hnu + 2 H2O = 2 a plastoquinol + O2. Functionally, photosystem II (PSII) is a light-driven water:plastoquinone oxidoreductase that uses light energy to abstract electrons from H(2)O, generating O(2) and a proton gradient subsequently used for ATP formation. It consists of a core antenna complex that captures photons, and an electron transfer chain that converts photonic excitation into a charge separation. The D1/D2 (PsbA/PsbD) reaction center heterodimer binds P680, the primary electron donor of PSII as well as several subsequent electron acceptors. The protein is Photosystem II protein D1 of Morus indica (Mulberry).